A 692-amino-acid polypeptide reads, in one-letter code: Single-strand DNA endonuclease ASTE1 (692 aa).

This sequence belongs to the asteroid family.

Structure-specific DNA endonuclease that specifically cleaves single-stranded DNA and 3' overhang DNA. The protein is Single-strand DNA endonuclease ASTE1 (aste1a) of Danio rerio (Zebrafish).